Reading from the N-terminus, the 1795-residue chain is Protein TIC 214 (1795 aa).

6 consecutive transmembrane segments (helical) span residues 19–39 (IINSVVVVGLYYGFLTTFSIG), 68–88 (FIAGQLMMFISIYYAPLHLAL), 91–111 (PHTITVLALPYLLFHFFWNNH), 133–153 (VFLNNLIFQLFNHFILPSSML), 176–196 (VGWLIGHILFMKWVGLVLVWI), and 227–247 (IFSILLFITCVYYLGRIPSPI). Positions 1490-1517 (EKESTGQVEFESDKEQQRNSESALSNQE) are disordered. A compositionally biased stretch (polar residues) spans 1508 to 1517 (NSESALSNQE).

Belongs to the TIC214 family. Part of the Tic complex.

The protein resides in the plastid. It localises to the chloroplast inner membrane. In terms of biological role, involved in protein precursor import into chloroplasts. May be part of an intermediate translocation complex acting as a protein-conducting channel at the inner envelope. This chain is Protein TIC 214, found in Crucihimalaya wallichii (Rock-cress).